Here is a 230-residue protein sequence, read N- to C-terminus: 7-cyano-7-deazaguanine synthase (230 aa).

An ATP-binding site is contributed by 7-17; the sequence is CSGGLDSVSLA. The Zn(2+) site is built by Cys-185, Cys-193, Cys-196, and Cys-199.

The protein belongs to the QueC family. Zn(2+) is required as a cofactor.

The enzyme catalyses 7-carboxy-7-deazaguanine + NH4(+) + ATP = 7-cyano-7-deazaguanine + ADP + phosphate + H2O + H(+). Its pathway is purine metabolism; 7-cyano-7-deazaguanine biosynthesis. In terms of biological role, catalyzes the ATP-dependent conversion of 7-carboxy-7-deazaguanine (CDG) to 7-cyano-7-deazaguanine (preQ(0)). This chain is 7-cyano-7-deazaguanine synthase, found in Ruegeria pomeroyi (strain ATCC 700808 / DSM 15171 / DSS-3) (Silicibacter pomeroyi).